A 753-amino-acid polypeptide reads, in one-letter code: 5-methyltetrahydropteroyltriglutamate--homocysteine methyltransferase (753 aa).

5-methyltetrahydropteroyltri-L-glutamate contacts are provided by residues arginine 17–lysine 20 and lysine 117. Residues isoleucine 431–serine 433 and glutamate 484 contribute to the L-homocysteine site. L-methionine contacts are provided by residues isoleucine 431–serine 433 and glutamate 484. Residues arginine 515 to cysteine 516 and tryptophan 561 each bind 5-methyltetrahydropteroyltri-L-glutamate. Aspartate 599 provides a ligand contact to L-homocysteine. Aspartate 599 contacts L-methionine. Glutamate 605 serves as a coordination point for 5-methyltetrahydropteroyltri-L-glutamate. Zn(2+) contacts are provided by histidine 641, cysteine 643, and glutamate 665. The active-site Proton donor is the histidine 694. Residue cysteine 726 coordinates Zn(2+).

The protein belongs to the vitamin-B12 independent methionine synthase family. Zn(2+) serves as cofactor.

It catalyses the reaction 5-methyltetrahydropteroyltri-L-glutamate + L-homocysteine = tetrahydropteroyltri-L-glutamate + L-methionine. It participates in amino-acid biosynthesis; L-methionine biosynthesis via de novo pathway; L-methionine from L-homocysteine (MetE route): step 1/1. Catalyzes the transfer of a methyl group from 5-methyltetrahydrofolate to homocysteine resulting in methionine formation. The polypeptide is 5-methyltetrahydropteroyltriglutamate--homocysteine methyltransferase (Shigella boydii serotype 4 (strain Sb227)).